The sequence spans 2430 residues: Spatacsin (2430 aa).

2 positions are modified to phosphoserine: S1942 and S1943.

As to quaternary structure, interacts with AP5Z1, AP5B1, AP5S1 and ZFYVE26. Ubiquitously expressed at low level. Expressed in embryonic and adult cortical projection neurons.

The protein resides in the cytoplasm. It localises to the cytosol. The protein localises to the nucleus. Its subcellular location is the cell projection. It is found in the axon. The protein resides in the dendrite. It localises to the synapse. In terms of biological role, may play a role in neurite plasticity by maintaining cytoskeleton stability and regulating synaptic vesicle transport. The sequence is that of Spatacsin (Spg11) from Mus musculus (Mouse).